The primary structure comprises 692 residues: Zinc finger protein 180 (692 aa).

One can recognise a KRAB domain in the interval 72-145; it reads VNFKIVTVDF…GVKIERFTRD (74 aa). Glycyl lysine isopeptide (Lys-Gly) (interchain with G-Cter in SUMO2) cross-links involve residues K138, K159, K168, K191, K198, K226, K304, K313, and K330. 12 C2H2-type zinc fingers span residues 353–375, 381–403, 409–431, 437–459, 465–487, 493–515, 521–543, 549–571, 577–599, 605–627, 633–655, and 661–683; these read FECNQCGKSFSWSSHLVAHQRTH, YECSECGKSFSRSSHLVSHQRTH, YRCNQCGKSFSQSYVLVVHQRTH, YECNQCGKSFRQSYKLIAHQRTH, YECNQCGKSFIQSYKLIAHQRIH, YECNQCGKSFSQSYKLVAHQRTH, FECNQCGKSFSWSSQLVAHQRTH, YECSECGKSFNRSSHLVMHQRIH, YECNQCGKSFSQSYVLVVHQRTH, YECSQCGKSFRQSSCLTQHQRTH, FECNQCGKTFSLSARLIVHQRTH, and FTCIQCGKAFINSYKLIRHQATH.

Belongs to the krueppel C2H2-type zinc-finger protein family.

Its subcellular location is the nucleus. In terms of biological role, may be involved in transcriptional regulation. This Homo sapiens (Human) protein is Zinc finger protein 180 (ZNF180).